The following is a 249-amino-acid chain: 5'-nucleotidase SurE (249 aa).

A divalent metal cation contacts are provided by aspartate 8, aspartate 9, serine 39, and asparagine 91.

This sequence belongs to the SurE nucleotidase family. Requires a divalent metal cation as cofactor.

It is found in the cytoplasm. The catalysed reaction is a ribonucleoside 5'-phosphate + H2O = a ribonucleoside + phosphate. In terms of biological role, nucleotidase that shows phosphatase activity on nucleoside 5'-monophosphates. This chain is 5'-nucleotidase SurE, found in Haemophilus influenzae (strain PittEE).